A 250-amino-acid chain; its full sequence is Methylthioribulose-1-phosphate dehydratase (250 aa).

Cys-103 contacts substrate. Residues His-121 and His-123 each contribute to the Zn(2+) site. The active-site Proton donor/acceptor is the Glu-146. His-211 lines the Zn(2+) pocket.

This sequence belongs to the aldolase class II family. MtnB subfamily. Zn(2+) serves as cofactor.

The protein resides in the cytoplasm. It carries out the reaction 5-(methylsulfanyl)-D-ribulose 1-phosphate = 5-methylsulfanyl-2,3-dioxopentyl phosphate + H2O. It participates in amino-acid biosynthesis; L-methionine biosynthesis via salvage pathway; L-methionine from S-methyl-5-thio-alpha-D-ribose 1-phosphate: step 2/6. Catalyzes the dehydration of methylthioribulose-1-phosphate (MTRu-1-P) into 2,3-diketo-5-methylthiopentyl-1-phosphate (DK-MTP-1-P). This Clavispora lusitaniae (strain ATCC 42720) (Yeast) protein is Methylthioribulose-1-phosphate dehydratase.